A 504-amino-acid chain; its full sequence is E3 ubiquitin-protein ligase dbl4 (504 aa).

A TRIAD supradomain region spans residues 127-338 (HEGTCEICYD…NNWYTCNRYE (212 aa)). Residues cysteine 131, cysteine 134, cysteine 147, histidine 149, cysteine 152, cysteine 155, cysteine 173, cysteine 178, cysteine 217, cysteine 222, cysteine 244, cysteine 246, cysteine 251, cysteine 254, histidine 259, cysteine 264, cysteine 291, and cysteine 294 each coordinate Zn(2+). The RING-type 1 zinc-finger motif lies at 131–178 (CEICYDEGCLPFFSAECDHEFCLACYRQYLDSRISEGESVIQCPEESC). The IBR-type zinc finger occupies 197 to 264 (DRYHRLLDRS…GHDNHQPTIC (68 aa)). An RING-type 2; atypical zinc finger spans residues 291–320 (CPKCSTTIEKNGGCNHMTCKKCKYEFCWVC). The active site involves cysteine 304. Zn(2+) is bound by residues cysteine 309, cysteine 312, cysteine 317, cysteine 320, histidine 327, and cysteine 334.

This sequence belongs to the RBR family.

The protein resides in the cytoplasm. It is found in the nucleus. The catalysed reaction is [E2 ubiquitin-conjugating enzyme]-S-ubiquitinyl-L-cysteine + [acceptor protein]-L-lysine = [E2 ubiquitin-conjugating enzyme]-L-cysteine + [acceptor protein]-N(6)-ubiquitinyl-L-lysine.. Its pathway is protein modification; protein ubiquitination. In terms of biological role, probable ubiquitin-protein ligase involved in the degradation-related ubiquitination of histones. Contributes to the post-translational regulation of histone protein levels by polyubiquitination of excess histones for subsequent degradation. This chain is E3 ubiquitin-protein ligase dbl4, found in Schizosaccharomyces pombe (strain 972 / ATCC 24843) (Fission yeast).